The sequence spans 110 residues: uncharacterized protein (110 aa).

Residues 85 to 110 (ARKAERPSQGGKDYNGTAKSAQSTTV) are disordered. Polar residues predominate over residues 101 to 110 (TAKSAQSTTV).

This is an uncharacterized protein from Saccharomyces cerevisiae (strain ATCC 204508 / S288c) (Baker's yeast).